Here is a 177-residue protein sequence, read N- to C-terminus: Endoribonuclease YbeY (177 aa).

Zn(2+) is bound by residues histidine 118, histidine 122, and histidine 128.

This sequence belongs to the endoribonuclease YbeY family. Zn(2+) serves as cofactor.

The protein localises to the cytoplasm. Its function is as follows. Single strand-specific metallo-endoribonuclease involved in late-stage 70S ribosome quality control and in maturation of the 3' terminus of the 16S rRNA. The chain is Endoribonuclease YbeY from Mycolicibacterium paratuberculosis (strain ATCC BAA-968 / K-10) (Mycobacterium paratuberculosis).